A 423-amino-acid chain; its full sequence is Gamma-glutamyl phosphate reductase (423 aa).

Belongs to the gamma-glutamyl phosphate reductase family.

Its subcellular location is the cytoplasm. The enzyme catalyses L-glutamate 5-semialdehyde + phosphate + NADP(+) = L-glutamyl 5-phosphate + NADPH + H(+). Its pathway is amino-acid biosynthesis; L-proline biosynthesis; L-glutamate 5-semialdehyde from L-glutamate: step 2/2. In terms of biological role, catalyzes the NADPH-dependent reduction of L-glutamate 5-phosphate into L-glutamate 5-semialdehyde and phosphate. The product spontaneously undergoes cyclization to form 1-pyrroline-5-carboxylate. This Roseiflexus castenholzii (strain DSM 13941 / HLO8) protein is Gamma-glutamyl phosphate reductase.